A 344-amino-acid chain; its full sequence is N-acetyl-gamma-glutamyl-phosphate reductase (344 aa).

The active site involves C150.

It belongs to the NAGSA dehydrogenase family. Type 1 subfamily.

The protein resides in the cytoplasm. It carries out the reaction N-acetyl-L-glutamate 5-semialdehyde + phosphate + NADP(+) = N-acetyl-L-glutamyl 5-phosphate + NADPH + H(+). The protein operates within amino-acid biosynthesis; L-arginine biosynthesis; N(2)-acetyl-L-ornithine from L-glutamate: step 3/4. Functionally, catalyzes the NADPH-dependent reduction of N-acetyl-5-glutamyl phosphate to yield N-acetyl-L-glutamate 5-semialdehyde. The protein is N-acetyl-gamma-glutamyl-phosphate reductase of Pseudomonas savastanoi pv. phaseolicola (strain 1448A / Race 6) (Pseudomonas syringae pv. phaseolicola (strain 1448A / Race 6)).